A 465-amino-acid polypeptide reads, in one-letter code: Cysteine--tRNA ligase (465 aa).

Cys-29 contacts Zn(2+). The 'HIGH' region motif lies at 31–41 (PTVYNYIHIGN). 3 residues coordinate Zn(2+): Cys-209, His-234, and Glu-238. The short motif at 266–270 (KMSKS) is the 'KMSKS' region element. Lys-269 contacts ATP. Ser-270 is modified (phosphoserine).

The protein belongs to the class-I aminoacyl-tRNA synthetase family. Monomer. It depends on Zn(2+) as a cofactor.

The protein resides in the cytoplasm. It carries out the reaction tRNA(Cys) + L-cysteine + ATP = L-cysteinyl-tRNA(Cys) + AMP + diphosphate. The sequence is that of Cysteine--tRNA ligase from Bacillus cereus (strain 03BB102).